A 61-amino-acid polypeptide reads, in one-letter code: Small ribosomal subunit protein uS14 (61 aa).

Cys24, Cys27, Cys40, and Cys43 together coordinate Zn(2+).

Belongs to the universal ribosomal protein uS14 family. Zinc-binding uS14 subfamily. Part of the 30S ribosomal subunit. Contacts proteins S3 and S10. Zn(2+) serves as cofactor.

Functionally, binds 16S rRNA, required for the assembly of 30S particles and may also be responsible for determining the conformation of the 16S rRNA at the A site. The chain is Small ribosomal subunit protein uS14 from Clostridium perfringens (strain ATCC 13124 / DSM 756 / JCM 1290 / NCIMB 6125 / NCTC 8237 / Type A).